The sequence spans 194 residues: N-acetyltransferase (194 aa).

The 165-residue stretch at 9–173 folds into the N-acetyltransferase domain; that stretch reads PQVRPGIAED…GRYWDVRWYE (165 aa).

The protein belongs to the acetyltransferase family. PAT/BAR subfamily.

The polypeptide is N-acetyltransferase (nat) (Streptomyces griseus).